Here is a 116-residue protein sequence, read N- to C-terminus: MTRVKRGYIAKKRRKKILAFVSGSRGAHSKLFRVANQQKSRALVSAHRDRLKRKRDFRRLWITRINAASRANGVSYNKFIQFLYKRQLLTNRRTLAQIAVLNNNCFSMMLENILVS.

It belongs to the bacterial ribosomal protein bL20 family.

The protein resides in the plastid. It localises to the chloroplast. Its function is as follows. Binds directly to 23S ribosomal RNA and is necessary for the in vitro assembly process of the 50S ribosomal subunit. It is not involved in the protein synthesizing functions of that subunit. This Cryptomeria japonica (Japanese cedar) protein is Large ribosomal subunit protein bL20c.